A 1178-amino-acid chain; its full sequence is DNA-directed RNA polymerase subunit beta' (1178 aa).

4 residues coordinate Zn(2+): Cys60, Cys62, Cys75, and Cys78. Asp450, Asp452, and Asp454 together coordinate Mg(2+). Zn(2+) is bound by residues Cys795, Cys869, Cys876, and Cys879.

It belongs to the RNA polymerase beta' chain family. In terms of assembly, the RNAP catalytic core consists of 2 alpha, 1 beta, 1 beta' and 1 omega subunit. When a sigma factor is associated with the core the holoenzyme is formed, which can initiate transcription. Mg(2+) serves as cofactor. The cofactor is Zn(2+).

The catalysed reaction is RNA(n) + a ribonucleoside 5'-triphosphate = RNA(n+1) + diphosphate. Functionally, DNA-dependent RNA polymerase catalyzes the transcription of DNA into RNA using the four ribonucleoside triphosphates as substrates. The sequence is that of DNA-directed RNA polymerase subunit beta' from Clostridium botulinum (strain Loch Maree / Type A3).